The chain runs to 592 residues: Frizzled-1 (592 aa).

The tract at residues 1–26 (MAERRGPAGGGSGEVGGGRRAGGDRC) is disordered. Positions 1–48 (MAERRGPAGGGSGEVGGGRRAGGDRCPRRPPALPLLLLLWAAALPAGG) are cleaved as a signal peptide. Over residues 7–20 (PAGGGSGEVGGGRR) the composition is skewed to gly residues. The Extracellular portion of the chain corresponds to 49–271 (QPAAQPAALS…PEELRFSRTW (223 aa)). The FZ domain maps to 65–184 (PDHGYCQPIS…HGAGELCVGQ (120 aa)). 5 cysteine pairs are disulfide-bonded: cysteine 70–cysteine 131, cysteine 78–cysteine 124, cysteine 115–cysteine 152, cysteine 141–cysteine 181, and cysteine 145–cysteine 169. An N-linked (GlcNAc...) asparagine glycan is attached at asparagine 84. An N-linked (GlcNAc...) asparagine glycan is attached at asparagine 185. The tract at residues 185 to 219 (NASERGTPTPALRPESWTSNPHRGGGAGGSGPGEA) is disordered. Positions 207–218 (RGGGAGGSGPGE) are enriched in gly residues. Residues 272 to 292 (IGIWSVLCCASTLFTVLTYLV) form a helical membrane-spanning segment. Topologically, residues 293–303 (DMKRFSYPERP) are cytoplasmic. The chain crosses the membrane as a helical span at residues 304 to 324 (IIFLSGCYTAVAVAYIAGFLL). Topologically, residues 325-351 (EERVVCNERFAEDGSRTVAQGTKREGC) are extracellular. Residues 352-372 (TILFMMLYFFGMASSIWWVIL) form a helical membrane-spanning segment. Over 373-394 (SLTWFLAAGMKWGHEAIEANSQ) the chain is Cytoplasmic. The chain crosses the membrane as a helical span at residues 395–415 (YFHLAAWAVPAIKTITILALG). At 416–438 (QVDGDVLSGVCFVGINNVDALRG) the chain is on the extracellular side. A helical transmembrane segment spans residues 439-459 (FVLAPLFVYLFIGTSFLLAGF). At 460 to 485 (VSLFRIRTIMKHDGTKTEKLEKLMVR) the chain is on the cytoplasmic side. A helical transmembrane segment spans residues 486–506 (IGIFSVLYTVPATIVIACYFY). The Extracellular portion of the chain corresponds to 507-546 (EQAFREQWERSWVTQSCKSYAIPCPNNHSSHHPPMSPDFT). Asparagine 533 is a glycosylation site (N-linked (GlcNAc...) asparagine). Residues 547 to 567 (VFMIKYLMTLIVGITSGFWIW) traverse the membrane as a helical segment. Residues 568–592 (SGKTLNSWRKFYTRLTNSKQGETTV) are Cytoplasmic-facing. The Lys-Thr-X-X-X-Trp motif, mediates interaction with the PDZ domain of Dvl family members motif lies at 570–575 (KTLNSW). The PDZ-binding motif lies at 590–592 (TTV).

It belongs to the G-protein coupled receptor Fz/Smo family. Expressed in the lens, otic placode (medial wall of the vesicle) and in epibranchial placode. Also expressed in the developing somites (dermomyotome).

It localises to the cell membrane. Functionally, receptor for Wnt proteins. Functions in the canonical Wnt/beta-catenin signaling pathway. The canonical Wnt/beta-catenin signaling pathway leads to the activation of disheveled proteins, inhibition of GSK-3 kinase, nuclear accumulation of beta-catenin and activation of Wnt target genes. A second signaling pathway involving PKC and calcium fluxes has been seen for some family members, but it is not yet clear if it represents a distinct pathway or if it can be integrated in the canonical pathway, as PKC seems to be required for Wnt-mediated inactivation of GSK-3 kinase. Both pathways seem to involve interactions with G-proteins. May be involved in transduction and intercellular transmission of polarity information during tissue morphogenesis and/or in differentiated tissues. The chain is Frizzled-1 (FZD1) from Gallus gallus (Chicken).